We begin with the raw amino-acid sequence, 228 residues long: Ribose-5-phosphate isomerase A (228 aa).

Substrate contacts are provided by residues 29 to 32 (TGST), 84 to 87 (DGAD), and 97 to 100 (KGGG). Glu106 functions as the Proton acceptor in the catalytic mechanism. Lys124 contacts substrate.

Belongs to the ribose 5-phosphate isomerase family. Homodimer.

It carries out the reaction aldehydo-D-ribose 5-phosphate = D-ribulose 5-phosphate. It functions in the pathway carbohydrate degradation; pentose phosphate pathway; D-ribose 5-phosphate from D-ribulose 5-phosphate (non-oxidative stage): step 1/1. Catalyzes the reversible conversion of ribose-5-phosphate to ribulose 5-phosphate. The chain is Ribose-5-phosphate isomerase A from Sphingopyxis alaskensis (strain DSM 13593 / LMG 18877 / RB2256) (Sphingomonas alaskensis).